A 678-amino-acid polypeptide reads, in one-letter code: RxLR effector protein PITG_16705 (678 aa).

The signal sequence occupies residues 1 to 20; the sequence is MHLFFLTAVAFVITSVSVDA. A RxLR-dEER motif is present at residues 46-61; that stretch reads RLLRKNSTVDLVGEER.

This sequence belongs to the RxLR effector family.

Its subcellular location is the secreted. The protein resides in the host cytoplasm. Its function is as follows. Effector that enhances P.infestans colonization of Nicotiana benthamiana leaves. This chain is RxLR effector protein PITG_16705, found in Phytophthora infestans (strain T30-4) (Potato late blight agent).